We begin with the raw amino-acid sequence, 386 residues long: Lipoyl synthase, mitochondrial (386 aa).

Residues 1 to 21 constitute a mitochondrion transit peptide; the sequence is MISRNSILLRRLYPTTIIRTL. Cys107, Cys112, Cys118, Cys137, Cys141, Cys144, and Ser352 together coordinate [4Fe-4S] cluster. The region spanning 122-341 is the Radical SAM core domain; sequence KKSEATATIM…RDTALDMGFL (220 aa).

Belongs to the radical SAM superfamily. Lipoyl synthase family. [4Fe-4S] cluster is required as a cofactor.

The protein localises to the mitochondrion. The catalysed reaction is [[Fe-S] cluster scaffold protein carrying a second [4Fe-4S](2+) cluster] + N(6)-octanoyl-L-lysyl-[protein] + 2 oxidized [2Fe-2S]-[ferredoxin] + 2 S-adenosyl-L-methionine + 4 H(+) = [[Fe-S] cluster scaffold protein] + N(6)-[(R)-dihydrolipoyl]-L-lysyl-[protein] + 4 Fe(3+) + 2 hydrogen sulfide + 2 5'-deoxyadenosine + 2 L-methionine + 2 reduced [2Fe-2S]-[ferredoxin]. The protein operates within protein modification; protein lipoylation via endogenous pathway; protein N(6)-(lipoyl)lysine from octanoyl-[acyl-carrier-protein]: step 2/2. Functionally, catalyzes the radical-mediated insertion of two sulfur atoms into the C-6 and C-8 positions of the octanoyl moiety bound to the lipoyl domains of lipoate-dependent enzymes, thereby converting the octanoylated domains into lipoylated derivatives. This chain is Lipoyl synthase, mitochondrial (LAB5), found in Candida albicans (strain SC5314 / ATCC MYA-2876) (Yeast).